The sequence spans 257 residues: uncharacterized protein (257 aa).

This is an uncharacterized protein from Mycobacterium tuberculosis (strain CDC 1551 / Oshkosh).